Here is a 5100-residue protein sequence, read N- to C-terminus: Hemicentin-2 (5100 aa).

A signal peptide spans 1–19 (MTPGAQLLPLLVAISTAVA). The 175-residue stretch at 37–211 (DATLAFVFDV…QVSEVLKWVE (175 aa)) folds into the VWFA domain. Asn-330, Asn-347, Asn-380, Asn-479, Asn-526, Asn-548, and Asn-675 each carry an N-linked (GlcNAc...) asparagine glycan. Ig-like C2-type domains follow at residues 426 to 515 (PGVP…IVIT), 517 to 601 (PPPQ…RATT), 609 to 692 (PQVS…ETVT), 699 to 782 (PSVS…IQLV), 787 to 877 (PRLT…LVVT), 882 to 968 (PQIA…VELV), 973 to 1058 (PRIH…MWLS), 1063 to 1156 (PMIK…YVLR), 1161 to 1239 (PQVQ…WKLE), 1246 to 1335 (PHWG…AKLV), 1340 to 1437 (PSIR…FNLA), 1442 to 1531 (PSLL…FQLS), 1536 to 1624 (PTIW…TSLE), 1629 to 1717 (PTIE…YSVE), 1722 to 1810 (PQLL…VEVS), 1825 to 1913 (SAHH…KDVT), 1920 to 2008 (PNIE…LRVN), 2011 to 2100 (PRIT…VILQ), 2105 to 2189 (PSIL…KHFN), 2196 to 2285 (PAFP…QSLE), 2290 to 2379 (PQVT…FALS), 2384 to 2473 (PHLT…FSVE), 2478 to 2566 (PSIE…TQLS), 2571 to 2662 (PTIL…YHVE), 2667 to 2758 (PSIS…QDFN), 2781 to 2871 (PHEE…YELL), 2875 to 2964 (PPVI…KLFT), 2971 to 3058 (PQIS…VQLN), 3063 to 3153 (PSFK…FVLA), 3157 to 3245 (PPTF…FVVS), 3250 to 3340 (PQIQ…HTVN), 3345 to 3432 (PTIK…RNFT), 3438 to 3523 (PPIL…FQLT), 3528 to 3609 (PHIE…FRVR), 3614 to 3702 (PNVV…FRVE), 3707 to 3793 (PTIQ…LDLR), 3798 to 3886 (PAIA…YQVT), 3891 to 3977 (PTIA…MVLT), 3982 to 4067 (PVVK…TRLV), 4071 to 4158 (PPVI…VHLT), 4163 to 4244 (PVLT…QAVS), 4252 to 4336 (PVLQ…KVVT), and 4343 to 4428 (PVFQ…ALLA). Cys-449 and Cys-497 are oxidised to a cystine. 6 disulfides stabilise this stretch: Cys-539/Cys-588, Cys-630/Cys-678, Cys-720/Cys-766, Cys-808/Cys-859, Cys-903/Cys-952, and Cys-994/Cys-1042. 3 positions are modified to omega-N-methylarginine: Arg-909, Arg-914, and Arg-915. Residues Asn-1024 and Asn-1068 are each glycosylated (N-linked (GlcNAc...) asparagine). 2 disulfide bridges follow: Cys-1091–Cys-1140 and Cys-1182–Cys-1225. Residue Asn-1264 is glycosylated (N-linked (GlcNAc...) asparagine). The segment at 1265–1293 (ASLPCPAQGTPKPRITWRRGPSSEPLNGR) is disordered. An intrachain disulfide couples Cys-1269 to Cys-1319. The N-linked (GlcNAc...) asparagine glycan is linked to Asn-1350. 2 cysteine pairs are disulfide-bonded: Cys-1363-Cys-1421 and Cys-1465-Cys-1515. A glycan (N-linked (GlcNAc...) asparagine) is linked at Asn-1542. 4 disulfides stabilise this stretch: Cys-1559-Cys-1608, Cys-1653-Cys-1701, Cys-1745-Cys-1794, and Cys-1846-Cys-1899. Asn-1676 and Asn-1787 each carry an N-linked (GlcNAc...) asparagine glycan. Asn-1934 carries an N-linked (GlcNAc...) asparagine glycan. Cystine bridges form between Cys-1941–Cys-1990 and Cys-2033–Cys-2084. Asn-2034, Asn-2113, and Asn-2119 each carry an N-linked (GlcNAc...) asparagine glycan. 2 disulfide bridges follow: Cys-2126–Cys-2175 and Cys-2218–Cys-2269. N-linked (GlcNAc...) asparagine glycans are attached at residues Asn-2309, Asn-2315, Asn-2345, and Asn-2395. Cys-2314 and Cys-2363 are joined by a disulfide. A disulfide bridge connects residues Cys-2408 and Cys-2457. N-linked (GlcNAc...) asparagine glycosylation is found at Asn-2469, Asn-2502, Asn-2541, Asn-2606, and Asn-2688. Disulfide bonds link Cys-2501–Cys-2550 and Cys-2597–Cys-2646. Cystine bridges form between Cys-2695–Cys-2744 and Cys-2806–Cys-2855. N-linked (GlcNAc...) asparagine glycosylation occurs at Asn-2892. A disulfide bridge connects residues Cys-2901 and Cys-2950. Asn-2986 carries an N-linked (GlcNAc...) asparagine glycan. Intrachain disulfides connect Cys-2993–Cys-3042, Cys-3088–Cys-3137, Cys-3180–Cys-3229, Cys-3273–Cys-3324, and Cys-3369–Cys-3418. N-linked (GlcNAc...) asparagine glycosylation is present at Asn-3430. 3 cysteine pairs are disulfide-bonded: Cys-3462–Cys-3507, Cys-3551–Cys-3593, and Cys-3637–Cys-3686. N-linked (GlcNAc...) asparagine glycans are attached at residues Asn-3560 and Asn-3575. Residues Asn-3717 and Asn-3721 are each glycosylated (N-linked (GlcNAc...) asparagine). Residues Cys-3728 and Cys-3777 are joined by a disulfide bond. Asn-3806 carries N-linked (GlcNAc...) asparagine glycosylation. Disulfide bonds link Cys-3819/Cys-3870, Cys-3912/Cys-3961, Cys-4003/Cys-4051, Cys-4093/Cys-4142, Cys-4184/Cys-4231, Cys-4274/Cys-4322, and Cys-4364/Cys-4412. N-linked (GlcNAc...) asparagine glycosylation is present at Asn-4304. The Nidogen G2 beta-barrel domain maps to 4432–4654 (EPRGSRGSMT…QTEENEVGCP (223 aa)). Asn-4455 and Asn-4601 each carry an N-linked (GlcNAc...) asparagine glycan. One can recognise an EGF-like 1; calcium-binding domain in the interval 4668–4708 (DKDECSGGPSPCSHTCRNAPGHFSCSCPTGFSLAWDHRNCR). Cystine bridges form between Cys-4672/Cys-4683, Cys-4679/Cys-4692, Cys-4694/Cys-4707, Cys-4713/Cys-4726, Cys-4720/Cys-4735, Cys-4739/Cys-4752, Cys-4758/Cys-4771, Cys-4765/Cys-4780, Cys-4801/Cys-4812, Cys-4808/Cys-4821, and Cys-4823/Cys-4836. In terms of domain architecture, EGF-like 2; calcium-binding spans 4709 to 4753 (DVDECAGNTHLCQEEQRCVNLLGSYNCLASCRPGFRVTADGSNCE). The region spanning 4754–4789 (DVDECLEQLDECHYNQLCENTPGGHHCGCPRGYRQQ) is the EGF-like 3; calcium-binding domain. In terms of domain architecture, EGF-like 4; calcium-binding spans 4797–4837 (DINECLQLPTPCVYQCQNLQGSYRCLCPPGQTLLRDGRTCI). N-linked (GlcNAc...) asparagine glycosylation occurs at Asn-4845. An EGF-like 5; calcium-binding domain is found at 4904–4943 (DLDECRVRSLCQHACQNTEGSYYCLCPSGYRLLPSGKNCQ). Disulfide bonds link Cys-4908–Cys-4918, Cys-4914–Cys-4927, and Cys-4929–Cys-4942. Asn-5035 is a glycosylation site (N-linked (GlcNAc...) asparagine).

Post-translationally, reported to be phosphorylated; however as this position is extracellular, the in vivo relevance is unsure. As to expression, in neonatal skin, localized in the pericellular space of basal epidermal keratinocytes (at protein level). In adult skin, restricted to basal keratinocytes of hair follicles and the interfollicular epidermis. Absent from the myotendinous junction but present in skeletal muscle (at protein level). Expressed in the pericellular extracellular matrix of epithelial cells in a number of tissues including embryonic trophectoderm and adult skin and tongue. Also present in the extracellular matrix of some, but not all, blood vessels. Expressed primarily in epithelial cells in the embryonic epidermis, lung, intestine, skeletal hindlimb muscle, tongue and the muscular layers of the esophagus.

Its subcellular location is the secreted. It is found in the extracellular space. The protein resides in the extracellular matrix. The protein localises to the cleavage furrow. This Mus musculus (Mouse) protein is Hemicentin-2 (Hmcn2).